Reading from the N-terminus, the 179-residue chain is Probable DNA-directed RNA polymerase subunit delta (179 aa).

Positions 14-81 (MSLVELAYEI…GDQRWGLRSW (68 aa)) constitute an HTH HARE-type domain. Residues 108–179 (VVEEDFDEIE…DDLDDNEEEK (72 aa)) are disordered. A compositionally biased stretch (acidic residues) spans 109–179 (VEEDFDEIEE…DDLDDNEEEK (71 aa)).

The protein belongs to the RpoE family. RNAP is composed of a core of 2 alpha, a beta and a beta' subunits. The core is associated with a delta subunit and one of several sigma factors.

Participates in both the initiation and recycling phases of transcription. In the presence of the delta subunit, RNAP displays an increased specificity of transcription, a decreased affinity for nucleic acids, and an increased efficiency of RNA synthesis because of enhanced recycling. This is Probable DNA-directed RNA polymerase subunit delta from Bacillus pumilus (strain SAFR-032).